We begin with the raw amino-acid sequence, 130 residues long: Small ribosomal subunit protein bS6 (130 aa).

Residues 100 to 130 (SPMVKAKDERRERHDFASEANDDSEAGDSEE) are disordered. A compositionally biased stretch (basic and acidic residues) spans 104 to 116 (KAKDERRERHDFA). Residues 119-130 (ANDDSEAGDSEE) show a composition bias toward acidic residues.

The protein belongs to the bacterial ribosomal protein bS6 family.

In terms of biological role, binds together with bS18 to 16S ribosomal RNA. The protein is Small ribosomal subunit protein bS6 of Yersinia pestis (strain Pestoides F).